Consider the following 131-residue polypeptide: Small ribosomal subunit protein uS8 (131 aa).

Belongs to the universal ribosomal protein uS8 family. As to quaternary structure, part of the 30S ribosomal subunit. Contacts proteins S5 and S12.

Functionally, one of the primary rRNA binding proteins, it binds directly to 16S rRNA central domain where it helps coordinate assembly of the platform of the 30S subunit. This chain is Small ribosomal subunit protein uS8, found in Desulforudis audaxviator (strain MP104C).